The primary structure comprises 229 residues: Putative N-acetylmannosamine-6-phosphate 2-epimerase (229 aa).

This sequence belongs to the NanE family.

It catalyses the reaction an N-acyl-D-glucosamine 6-phosphate = an N-acyl-D-mannosamine 6-phosphate. It functions in the pathway amino-sugar metabolism; N-acetylneuraminate degradation; D-fructose 6-phosphate from N-acetylneuraminate: step 3/5. In terms of biological role, converts N-acetylmannosamine-6-phosphate (ManNAc-6-P) to N-acetylglucosamine-6-phosphate (GlcNAc-6-P). The protein is Putative N-acetylmannosamine-6-phosphate 2-epimerase of Actinobacillus pleuropneumoniae serotype 5b (strain L20).